Reading from the N-terminus, the 498-residue chain is Glycerol kinase (498 aa).

T12 lines the ADP pocket. Positions 12, 13, and 14 each coordinate ATP. T12 is a binding site for sn-glycerol 3-phosphate. R16 is an ADP binding site. Positions 82, 83, and 134 each coordinate sn-glycerol 3-phosphate. 3 residues coordinate glycerol: R82, E83, and Y134. H230 is subject to Phosphohistidine; by HPr. D244 contacts sn-glycerol 3-phosphate. 2 residues coordinate glycerol: D244 and Q245. Residues T266 and G309 each contribute to the ADP site. 4 residues coordinate ATP: T266, G309, Q313, and G410. ADP-binding residues include G410 and N414.

This sequence belongs to the FGGY kinase family. As to quaternary structure, homotetramer and homodimer (in equilibrium). Post-translationally, the phosphoenolpyruvate-dependent sugar phosphotransferase system (PTS), including enzyme I, and histidine-containing protein (HPr) are required for the phosphorylation, which leads to the activation of the enzyme.

The catalysed reaction is glycerol + ATP = sn-glycerol 3-phosphate + ADP + H(+). It participates in polyol metabolism; glycerol degradation via glycerol kinase pathway; sn-glycerol 3-phosphate from glycerol: step 1/1. Its activity is regulated as follows. Activated by phosphorylation and inhibited by fructose 1,6-bisphosphate (FBP). Functionally, key enzyme in the regulation of glycerol uptake and metabolism. Catalyzes the phosphorylation of glycerol to yield sn-glycerol 3-phosphate. This chain is Glycerol kinase, found in Staphylococcus aureus (strain MSSA476).